A 635-amino-acid chain; its full sequence is Threonine--tRNA ligase (635 aa).

The TGS domain occupies 1–61; it reads MIQITLPDNS…DHDARLQIIT (61 aa). Positions 242–533 are catalytic; that stretch reads DHRKLGKELD…LIEHHAGALP (292 aa). Zn(2+) is bound by residues C333, H384, and H510.

The protein belongs to the class-II aminoacyl-tRNA synthetase family. Homodimer. Requires Zn(2+) as cofactor.

It is found in the cytoplasm. It carries out the reaction tRNA(Thr) + L-threonine + ATP = L-threonyl-tRNA(Thr) + AMP + diphosphate + H(+). Functionally, catalyzes the attachment of threonine to tRNA(Thr) in a two-step reaction: L-threonine is first activated by ATP to form Thr-AMP and then transferred to the acceptor end of tRNA(Thr). Also edits incorrectly charged L-seryl-tRNA(Thr). This is Threonine--tRNA ligase from Variovorax paradoxus (strain S110).